The following is a 295-amino-acid chain: 4-hydroxy-tetrahydrodipicolinate synthase 1 (295 aa).

Thr46 is a pyruvate binding site. Tyr134 functions as the Proton donor/acceptor in the catalytic mechanism. Residue Lys162 is the Schiff-base intermediate with substrate of the active site. A pyruvate-binding site is contributed by Val204.

This sequence belongs to the DapA family. Homotetramer; dimer of dimers.

It localises to the cytoplasm. The catalysed reaction is L-aspartate 4-semialdehyde + pyruvate = (2S,4S)-4-hydroxy-2,3,4,5-tetrahydrodipicolinate + H2O + H(+). It functions in the pathway amino-acid biosynthesis; L-lysine biosynthesis via DAP pathway; (S)-tetrahydrodipicolinate from L-aspartate: step 3/4. Catalyzes the condensation of (S)-aspartate-beta-semialdehyde [(S)-ASA] and pyruvate to 4-hydroxy-tetrahydrodipicolinate (HTPA). In Halalkalibacterium halodurans (strain ATCC BAA-125 / DSM 18197 / FERM 7344 / JCM 9153 / C-125) (Bacillus halodurans), this protein is 4-hydroxy-tetrahydrodipicolinate synthase 1.